A 168-amino-acid polypeptide reads, in one-letter code: Peptide deformylase (168 aa).

Fe cation-binding residues include C92 and H134. Residue E135 is part of the active site. H138 contacts Fe cation.

The protein belongs to the polypeptide deformylase family. The cofactor is Fe(2+).

The enzyme catalyses N-terminal N-formyl-L-methionyl-[peptide] + H2O = N-terminal L-methionyl-[peptide] + formate. Its function is as follows. Removes the formyl group from the N-terminal Met of newly synthesized proteins. Requires at least a dipeptide for an efficient rate of reaction. N-terminal L-methionine is a prerequisite for activity but the enzyme has broad specificity at other positions. The polypeptide is Peptide deformylase (Azotobacter vinelandii (strain DJ / ATCC BAA-1303)).